Reading from the N-terminus, the 467-residue chain is Light-independent protochlorophyllide reductase subunit N (467 aa).

[4Fe-4S] cluster is bound by residues C22, C47, and C107.

Belongs to the BchN/ChlN family. As to quaternary structure, protochlorophyllide reductase is composed of three subunits; ChlL, ChlN and ChlB. Forms a heterotetramer of two ChlB and two ChlN subunits. Requires [4Fe-4S] cluster as cofactor.

The protein localises to the plastid. It localises to the chloroplast. It catalyses the reaction chlorophyllide a + oxidized 2[4Fe-4S]-[ferredoxin] + 2 ADP + 2 phosphate = protochlorophyllide a + reduced 2[4Fe-4S]-[ferredoxin] + 2 ATP + 2 H2O. It participates in porphyrin-containing compound metabolism; chlorophyll biosynthesis (light-independent). Functionally, component of the dark-operative protochlorophyllide reductase (DPOR) that uses Mg-ATP and reduced ferredoxin to reduce ring D of protochlorophyllide (Pchlide) to form chlorophyllide a (Chlide). This reaction is light-independent. The NB-protein (ChlN-ChlB) is the catalytic component of the complex. The sequence is that of Light-independent protochlorophyllide reductase subunit N from Chara vulgaris (Common stonewort).